A 404-amino-acid chain; its full sequence is uncharacterized protein (404 aa).

Disordered stretches follow at residues 261–307 and 320–340; these read VSTG…SPSL and KKSHSANDSEEFFREDDGGAD. Phosphoserine occurs at positions 267, 276, and 279. Phosphothreonine occurs at positions 290 and 293. 5 positions are modified to phosphoserine: Ser-304, Ser-306, Ser-324, Ser-358, and Ser-362. Residues 320 to 336 are compositionally biased toward basic and acidic residues; sequence KKSHSANDSEEFFREDD.

This is an uncharacterized protein from Homo sapiens (Human).